A 126-amino-acid chain; its full sequence is Cytochrome c2 (126 aa).

4 residues coordinate heme c: cysteine 17, cysteine 20, histidine 21, and methionine 101.

The protein belongs to the cytochrome c family. In terms of processing, binds 1 heme c group covalently per subunit.

It is found in the periplasm. Functionally, cytochrome c2 is found mainly in purple, non-sulfur, photosynthetic bacteria where it functions as the electron donor to the oxidized bacteriochlorophyll in the photophosphorylation pathway. However, it may also have a role in the respiratory chain and is found in some non-photosynthetic bacteria. This is Cytochrome c2 from Rhodovulum adriaticum (Rhodopseudomonas adriatica).